The following is a 246-amino-acid chain: tRNA (guanine-N(1)-)-methyltransferase (246 aa).

Residues glycine 113 and 133–138 contribute to the S-adenosyl-L-methionine site; that span reads IGDYVL.

This sequence belongs to the RNA methyltransferase TrmD family. As to quaternary structure, homodimer.

The protein resides in the cytoplasm. The catalysed reaction is guanosine(37) in tRNA + S-adenosyl-L-methionine = N(1)-methylguanosine(37) in tRNA + S-adenosyl-L-homocysteine + H(+). Specifically methylates guanosine-37 in various tRNAs. The chain is tRNA (guanine-N(1)-)-methyltransferase from Haemophilus influenzae (strain PittEE).